A 371-amino-acid chain; its full sequence is Pyruvate dehydrogenase E1 component subunit alpha (371 aa).

Heterodimer of an alpha and a beta chain. Requires thiamine diphosphate as cofactor.

It carries out the reaction N(6)-[(R)-lipoyl]-L-lysyl-[protein] + pyruvate + H(+) = N(6)-[(R)-S(8)-acetyldihydrolipoyl]-L-lysyl-[protein] + CO2. Activity of the E1 module is inhibited by the pyruvate dehydrogenase inhibitor PdhI. Functionally, the pyruvate dehydrogenase complex catalyzes the overall conversion of pyruvate to acetyl-CoA and CO(2). It contains multiple copies of three enzymatic components: pyruvate dehydrogenase (E1), dihydrolipoamide acetyltransferase (E2) and lipoamide dehydrogenase (E3). In terms of biological role, the B.subtilis PDH complex also possesses branched-chain 2-oxoacid dehydrogenase (BCDH) activity. In Bacillus subtilis (strain 168), this protein is Pyruvate dehydrogenase E1 component subunit alpha.